A 144-amino-acid polypeptide reads, in one-letter code: uncharacterized protein (144 aa).

The region spanning 2–144 is the N-acetyltransferase domain; the sequence is IELDAINPNN…EDSVLLSKKL (143 aa).

It belongs to the acetyltransferase family.

It localises to the cytoplasm. Its subcellular location is the nucleus. This is an uncharacterized protein from Schizosaccharomyces pombe (strain 972 / ATCC 24843) (Fission yeast).